A 202-amino-acid chain; its full sequence is ATP-dependent Clp protease proteolytic subunit (202 aa).

Serine 101 functions as the Nucleophile in the catalytic mechanism. Residue histidine 126 is part of the active site.

The protein belongs to the peptidase S14 family. In terms of assembly, component of the chloroplastic Clp protease core complex.

It localises to the plastid. The protein localises to the chloroplast stroma. It catalyses the reaction Hydrolysis of proteins to small peptides in the presence of ATP and magnesium. alpha-casein is the usual test substrate. In the absence of ATP, only oligopeptides shorter than five residues are hydrolyzed (such as succinyl-Leu-Tyr-|-NHMec, and Leu-Tyr-Leu-|-Tyr-Trp, in which cleavage of the -Tyr-|-Leu- and -Tyr-|-Trp bonds also occurs).. Cleaves peptides in various proteins in a process that requires ATP hydrolysis. Has a chymotrypsin-like activity. Plays a major role in the degradation of misfolded proteins. This chain is ATP-dependent Clp protease proteolytic subunit, found in Acorus calamus (Sweet flag).